The following is a 565-amino-acid chain: Probable peptidoglycan D,D-transpeptidase PbpC (565 aa).

A helical membrane pass occupies residues 10-30 (FILVVTLFVLASLAVSGRLVY). Residue serine 289 is the Acyl-ester intermediate of the active site.

Belongs to the transpeptidase family. FtsI subfamily.

It is found in the cell inner membrane. It catalyses the reaction Preferential cleavage: (Ac)2-L-Lys-D-Ala-|-D-Ala. Also transpeptidation of peptidyl-alanyl moieties that are N-acyl substituents of D-alanine.. The protein operates within cell wall biogenesis; peptidoglycan biosynthesis. Its function is as follows. Catalyzes cross-linking of the peptidoglycan cell wall at the division septum. Binds penicillin. The sequence is that of Probable peptidoglycan D,D-transpeptidase PbpC from Pseudomonas aeruginosa (strain ATCC 15692 / DSM 22644 / CIP 104116 / JCM 14847 / LMG 12228 / 1C / PRS 101 / PAO1).